The following is a 652-amino-acid chain: Putative asparagine synthetase [glutamine-hydrolyzing] (652 aa).

Cys2 serves as the catalytic For GATase activity. The Glutamine amidotransferase type-2 domain maps to 2-231; that stretch reads CGLLAFVAAP…SGCFARIRAD (230 aa). L-glutamine contacts are provided by residues 60-64, 89-91, and Asp115; these read RLSII and NGE. ATP is bound at residue 382–383; it reads SG.

The protein belongs to the asparagine synthetase family.

It carries out the reaction L-aspartate + L-glutamine + ATP + H2O = L-asparagine + L-glutamate + AMP + diphosphate + H(+). Its pathway is amino-acid biosynthesis; L-asparagine biosynthesis; L-asparagine from L-aspartate (L-Gln route): step 1/1. This Mycobacterium bovis (strain ATCC BAA-935 / AF2122/97) protein is Putative asparagine synthetase [glutamine-hydrolyzing] (asnB).